We begin with the raw amino-acid sequence, 300 residues long: uncharacterized protein (300 aa).

The signal sequence occupies residues 1–22 (MKSFVWTLLGALSLGSLTTAYG).

The protein resides in the endoplasmic reticulum. This is an uncharacterized protein from Schizosaccharomyces pombe (strain 972 / ATCC 24843) (Fission yeast).